We begin with the raw amino-acid sequence, 300 residues long: B1 kinase (300 aa).

The region spanning 16–282 (WVVGPLIGKG…ITMVNSLTYF (267 aa)) is the Protein kinase domain. ATP contacts are provided by residues 22 to 30 (IGKGGFGSI) and K45. N147 acts as the Proton acceptor in catalysis.

It belongs to the protein kinase superfamily. Ser/Thr protein kinase family. Poxviruses subfamily. As to quaternary structure, interacts with host JIP1; this interaction increases the amount of MAPK bound to JIP1 and subsequently increases the activity of transcription factors, such as JUN, that respond to these complexes. Interacts with protein OPG198; this interaction inhibits the repressive activity of OPG198 pseudokinase on viral replication factory formation. Mg(2+) serves as cofactor. In terms of processing, autophosphorylated.

It is found in the virion. It localises to the host cytoplasm. The enzyme catalyses L-seryl-[protein] + ATP = O-phospho-L-seryl-[protein] + ADP + H(+). It catalyses the reaction L-threonyl-[protein] + ATP = O-phospho-L-threonyl-[protein] + ADP + H(+). Functionally, essential serine/threonine-protein kinase that plays different role in the viral life cycle. Phosphorylates the host small ribosomal protein RACK1 thereby customizing the ribosomes to a state optimal for viral mRNAs (which contain poly-A leaders) but not for host mRNAs. Facilitates viral DNA replication by inhibiting host BANF1, a cellular host defense responsive to foreign DNA. Phosphorylates host BANF1 on serine and threonine residues; this leads to BANF1 relocalization to the cytoplasm, loss of dimerization and impaired DNA binding activity. Indeed, BANF1 activity depends on its DNA-binding property which is blocked by VPK1-mediated phosphorylation. Required for viral intermediate genes expression, probably by inhibiting host BANF1. Modulates cellular responses via host JUN by two different mechanisms, either by direct phosphorylation or by modulation of upstream JIP1-MAPK complexes. Seems to participate in the accumulation/processing of late proteins and thus in virion maturation. In addition, inhibits B12 repressive activity on viral DNA replication via a phosphorylation-dependent mechanism. The chain is B1 kinase (OPG187) from Homo sapiens (Human).